A 352-amino-acid chain; its full sequence is Photosystem II D2 protein (352 aa).

The Cytoplasmic segment spans residues 1–31; that stretch reads MTIAIGRAPAERGWFDILDDWLKRDRFVFVG. A helical membrane pass occupies residues 32–53; it reads WSGILLFPCAYLALGGWLTGTT. At 54–108 the chain is on the lumenal side; sequence FVTSWYTHGLASSYLEGCNFLTVAVSTPANSMGHSLLLLWGPEAQGDFTRWCQLG. Residues 109–131 traverse the membrane as a helical segment; the sequence is GLWTFIALHGAFGLIGFMLRQFE. H117 lines the chlorophyll a pocket. Q129 lines the pheophytin a pocket. Over 132 to 140 the chain is Cytoplasmic; it reads IARLVGVRP. The helical transmembrane segment at 141-160 threads the bilayer; sequence YNAIAFSAPIAVFVSVFLIY. N142 is a binding site for pheophytin a. The Lumenal segment spans residues 161–193; sequence PLGQSSWFFAPSFGVAAIFRFLLFFQGFHNWTL. Residues 194–217 traverse the membrane as a helical segment; that stretch reads NPFHMMGVAGVLGGALLCAIHGAT. H197 contributes to the chlorophyll a binding site. Residues H214 and F261 each coordinate a plastoquinone. A Fe cation-binding site is contributed by H214. Topologically, residues 218-265 are cytoplasmic; sequence VENTLFQDGEGASTFRAFNPTQAEETYSMVTANRFWSQIFGIAFSNKR. A helical membrane pass occupies residues 266-288; sequence WLHFFMLFVPVTGLWMSAIGVVG. Residue H268 participates in Fe cation binding. Topologically, residues 289–352 are lumenal; sequence LALNLRSYDF…EEVLPRGNAL (64 aa).

The protein belongs to the reaction center PufL/M/PsbA/D family. As to quaternary structure, PSII is composed of 1 copy each of membrane proteins PsbA, PsbB, PsbC, PsbD, PsbE, PsbF, PsbH, PsbI, PsbJ, PsbK, PsbL, PsbM, PsbT, PsbX, PsbY, PsbZ, Psb30/Ycf12, peripheral proteins PsbO, CyanoQ (PsbQ), PsbU, PsbV and a large number of cofactors. It forms dimeric complexes. Part of a photosystem II (PSII) assembly intermediate complex PSII-I; crystallized from a strain deleted of psbJ, it forms monomeric PSII before addition of the oxygen evolving complex. PSII-I includes 3 assembly factors not found in mature PSII (Psb27, Psb28 and Psb34). The D1/D2 heterodimer binds P680, chlorophylls that are the primary electron donor of PSII, and subsequent electron acceptors. It shares a non-heme iron and each subunit binds pheophytin, quinone, additional chlorophylls, carotenoids and lipids. There is also a Cl(-1) ion associated with D1 and D2, which is required for oxygen evolution. PSII binds additional chlorophylls, carotenoids and specific lipids. serves as cofactor.

It localises to the cellular thylakoid membrane. The catalysed reaction is 2 a plastoquinone + 4 hnu + 2 H2O = 2 a plastoquinol + O2. Its function is as follows. Photosystem II (PSII) is a light-driven water:plastoquinone oxidoreductase that uses light energy to abstract electrons from H(2)O, generating O(2) and a proton gradient subsequently used for ATP formation. It consists of a core antenna complex that captures photons, and an electron transfer chain that converts photonic excitation into a charge separation. The D1/D2 (PsbA/PsbD) reaction center heterodimer binds P680, the primary electron donor of PSII as well as several subsequent electron acceptors. D2 is needed for assembly of a stable PSII complex. The sequence is that of Photosystem II D2 protein from Thermosynechococcus vestitus (strain NIES-2133 / IAM M-273 / BP-1).